The following is a 138-amino-acid chain: Large ribosomal subunit protein uL16 (138 aa).

It belongs to the universal ribosomal protein uL16 family. As to quaternary structure, part of the 50S ribosomal subunit.

Functionally, binds 23S rRNA and is also seen to make contacts with the A and possibly P site tRNAs. This chain is Large ribosomal subunit protein uL16, found in Ureaplasma urealyticum serovar 10 (strain ATCC 33699 / Western).